The primary structure comprises 186 residues: ATP synthase subunit delta (186 aa).

It belongs to the ATPase delta chain family. As to quaternary structure, F-type ATPases have 2 components, F(1) - the catalytic core - and F(0) - the membrane proton channel. F(1) has five subunits: alpha(3), beta(3), gamma(1), delta(1), epsilon(1). F(0) has three main subunits: a(1), b(2) and c(10-14). The alpha and beta chains form an alternating ring which encloses part of the gamma chain. F(1) is attached to F(0) by a central stalk formed by the gamma and epsilon chains, while a peripheral stalk is formed by the delta and b chains.

Its subcellular location is the cell membrane. F(1)F(0) ATP synthase produces ATP from ADP in the presence of a proton or sodium gradient. F-type ATPases consist of two structural domains, F(1) containing the extramembraneous catalytic core and F(0) containing the membrane proton channel, linked together by a central stalk and a peripheral stalk. During catalysis, ATP synthesis in the catalytic domain of F(1) is coupled via a rotary mechanism of the central stalk subunits to proton translocation. Its function is as follows. This protein is part of the stalk that links CF(0) to CF(1). It either transmits conformational changes from CF(0) to CF(1) or is implicated in proton conduction. In Mycoplasmopsis agalactiae (strain NCTC 10123 / CIP 59.7 / PG2) (Mycoplasma agalactiae), this protein is ATP synthase subunit delta.